The primary structure comprises 177 residues: Large ribosomal subunit protein uL6 (177 aa).

It belongs to the universal ribosomal protein uL6 family. In terms of assembly, part of the 50S ribosomal subunit.

This protein binds to the 23S rRNA, and is important in its secondary structure. It is located near the subunit interface in the base of the L7/L12 stalk, and near the tRNA binding site of the peptidyltransferase center. The sequence is that of Large ribosomal subunit protein uL6 from Cellvibrio japonicus (strain Ueda107) (Pseudomonas fluorescens subsp. cellulosa).